Here is a 487-residue protein sequence, read N- to C-terminus: Fibroblast growth factor receptor-like 1 (487 aa).

Positions 1 to 18 (MGLQLALLLAGIVALSDS) are cleaved as a signal peptide. Over 19-371 (ARGPPRIADK…PSSVSSLPWP (353 aa)) the chain is Extracellular. Residues 23–109 (PRIADKVIHR…GSTNVNYTLI (87 aa)) form the Ig-like C2-type 1 domain. An intrachain disulfide couples Cys45 to Cys93. N-linked (GlcNAc...) asparagine glycosylation is present at Asn105. The span at 115-125 (SSGKNSQTPEG) shows a compositional bias: polar residues. A disordered region spans residues 115 to 147 (SSGKNSQTPEGSNGEYEDHSGKQWAQPRFTQPA). 2 Ig-like C2-type domains span residues 141–231 (PRFT…YKVE) and 240–348 (PILT…AFLT). The cysteines at positions 166 and 215 are disulfide-linked. Asn225, Asn249, and Asn287 each carry an N-linked (GlcNAc...) asparagine glycan. An intrachain disulfide couples Cys262 to Cys332. Residues 372–392 (VIIGIPAGAVFIFGTILLWLC) form a helical membrane-spanning segment. Residues 393–487 (QTKKKPCSPP…HQHQHIQYQC (95 aa)) are Cytoplasmic-facing.

As to quaternary structure, interacts with heparin and FGF2. As to expression, expressed in cartilaginous structures.

It is found in the cell membrane. Functionally, has a negative effect on cell proliferation. In Gallus gallus (Chicken), this protein is Fibroblast growth factor receptor-like 1 (FGFRL1).